Here is a 229-residue protein sequence, read N- to C-terminus: MSQFPALEDFDDGLVTAPVDDSKNNTDFLEREKLALGEDAGQFETPEDKDALLNFENDSEAEQTRFEQNFPPIDAEMQASGTFSAPKAPYMGQAEVHPPEDESGDPEPVRKWKEDQMKRIQERDESSKKLRESNIEKARKAIDDFYENFNDKRDKVIAKSRKEQEKLLEENESKSTGTTSWERILKLIDLSDKPEAHGRSTERFRELLISLAKDSNAPGAAGTTVSSSS.

Disordered stretches follow at residues 1–24 (MSQFPALEDFDDGLVTAPVDDSKN) and 76–132 (EMQA…KLRE). Residues 107–132 (EPVRKWKEDQMKRIQERDESSKKLRE) show a composition bias toward basic and acidic residues. Serine 229 bears the Phosphoserine mark.

The protein belongs to the clathrin light chain family. In terms of assembly, clathrin coats are formed from molecules containing 3 heavy chains and 3 light chains.

It is found in the cytoplasmic vesicle membrane. The protein localises to the membrane. It localises to the coated pit. Functionally, clathrin is the major protein of the polyhedral coat of coated pits and vesicles. The chain is Clathrin light chain (clc1) from Schizosaccharomyces pombe (strain 972 / ATCC 24843) (Fission yeast).